Here is an 891-residue protein sequence, read N- to C-terminus: Targeting protein for Xklp2 homolog (891 aa).

Basic and acidic residues predominate over residues 42 to 54; it reads HENGVPLTFDDKA. Disordered regions lie at residues 42–310, 418–454, 472–518, 723–746, and 789–891; these read HENG…KSCP, NLRKYVPSPSKPQGITKPRPFNFSDNRKRTHEESFSG, HTKT…NRHR, CSGVPDKKVKPPTQMAPFSVAEKG, and STKP…SHTS. Residues 108–124 show a composition bias toward polar residues; it reads DDVSSAESETCEMSTDS. Acidic residues predominate over residues 141–154; that stretch reads DDEATVQESSDAEE. The segment covering 155–173 has biased composition (polar residues); the sequence is TQTLPSSCVDSSTAEMSTD. Positions 236–246 are enriched in basic residues; sequence PTRKSPRLHSR. Residues 442–454 are compositionally biased toward basic and acidic residues; it reads DNRKRTHEESFSG. The span at 791 to 802 shows a compositional bias: polar residues; it reads KPMTDISNFSLN. Basic and acidic residues-rich tracts occupy residues 803–822 and 831–852; these read TERRAEDRKGYEQAKYERQL and REAEKEEELRQQISKQRADSIH.

It belongs to the TPX2 family. In terms of tissue distribution, detectable in immature oocytes.

It localises to the nucleus. The protein resides in the cytoplasm. Its subcellular location is the cytoskeleton. It is found in the spindle. In terms of biological role, spindle assembly factor. Required for normal assembly of mitotic spindles. This Patiria pectinifera (Starfish) protein is Targeting protein for Xklp2 homolog.